A 622-amino-acid chain; its full sequence is 4-hydroxyphenylalkanoate adenylyltransferase (622 aa).

The protein belongs to the ATP-dependent AMP-binding enzyme family.

The catalysed reaction is 17-(4-hydroxyphenyl)heptadecanoate + holo-[(phenol)carboxyphthiodiolenone synthase] + ATP = 17-(4-hydroxyphenyl)heptadecanoyl-[(phenol)carboxyphthiodiolenone synthase] + AMP + diphosphate. It catalyses the reaction 19-(4-hydroxyphenyl)nonadecanoate + holo-[(phenol)carboxyphthiodiolenone synthase] + ATP = 19-(4-hydroxyphenyl)nonadecanoyl-[(phenol)carboxyphthiodiolenone synthase] + AMP + diphosphate. The protein operates within lipid metabolism; fatty acid biosynthesis. Catalyzes the activation of long-chain fatty acids as acyl-adenylates (acyl-AMP), which are then transferred to the multifunctional polyketide synthase PpsA for further chain extension. Involved in the biosynthesis of phenolphthiocerol, which is an important intermediate in the biosynthesis of phenolic glycolipid (PGL), also called mycosid B. In Mycobacterium marinum (strain ATCC BAA-535 / M), this protein is 4-hydroxyphenylalkanoate adenylyltransferase (fadD29).